Reading from the N-terminus, the 20-residue chain is Endo-1,6-beta-glucanase (20 aa).

This sequence belongs to the glycosyl hydrolase 5 (cellulase A) family.

It is found in the secreted. It localises to the extracellular space. It catalyses the reaction Random hydrolysis of (1-&gt;6)-linkages in (1-&gt;6)-beta-D-glucans.. Endo-1,6-beta-glucanase that has highest activity against the beta-1,6-glucan pustulan. Also active against the beta-1,6-glucan lutean. Lower activity against laminarin (beta-1,3-glucan with beta-1,6-branches). Little or no activity against gentiobiose, yeast glucan, lichenin, scleroglucan, curdlan, barley glucan, CM cellulose, HE cellulose, pachyman and pullulan. The polypeptide is Endo-1,6-beta-glucanase (Acremonium sp).